The sequence spans 387 residues: GDP-mannose transporter (387 aa).

The segment covering 1-25 (MADTKKNDNYAIDMDKLDAESDRFR) has biased composition (basic and acidic residues). Residues 1–42 (MADTKKNDNYAIDMDKLDAESDRFRPPPQPQPRHSSSSHSQS) are Cytoplasmic-facing. Positions 1-45 (MADTKKNDNYAIDMDKLDAESDRFRPPPQPQPRHSSSSHSQSISN) are disordered. The segment covering 32-45 (PRHSSSSHSQSISN) has biased composition (low complexity). Residues 43 to 63 (ISNSPVLPILSYCASSILMTV) form a helical membrane-spanning segment. Over 64 to 71 (TNKYVLSG) the chain is Lumenal. A helical transmembrane segment spans residues 72 to 92 (VQFNLNFFLLCVQSVVCIIAI). The Cytoplasmic portion of the chain corresponds to 93 to 112 (QTCKSMGLINYRDFNSDEAK). Residues 113-129 (KWFPISLLLIGMIYTGT) traverse the membrane as a helical segment. Over 130–136 (KALKFLS) the chain is Lumenal. The helical transmembrane segment at 137–153 (IPVYTIFKNLTIILIAY) threads the bilayer. Residues 154-162 (GEVLWFGGS) are Cytoplasmic-facing. A helical membrane pass occupies residues 163–184 (VTGMALFSFGLMVLSSVIAAWA). Residues 185-206 (DIKHALDTSGFSGAEATSKIST) are Lumenal-facing. Residues 207-227 (LNAGYIWMLINCLCTSTYILG) traverse the membrane as a helical segment. Residues 228–241 (MRKRIKLTNFKDFD) lie on the Cytoplasmic side of the membrane. The chain crosses the membrane as a helical span at residues 242-262 (TMFYNNLLSIPILMIGSFIVE). Topologically, residues 263–280 (DWSSENINKNFPIETRNS) are lumenal. Residues 281 to 301 (LIFAMIFSGLSSVFISYTSAW) traverse the membrane as a helical segment. Topologically, residues 302–309 (CVRVTSST) are cytoplasmic. The chain crosses the membrane as a helical span at residues 310-329 (TYSMVGALNKLPIALSGLIF). Over 330-332 (FGD) the chain is Lumenal. A helical transmembrane segment spans residues 333-355 (PVTVPSVSAIVVGFISGIVYSLA). The Cytoplasmic portion of the chain corresponds to 356-387 (KVKQNAKPRTGVLPTTNPVSASTQSMRDGLKS). The interval 366-387 (GVLPTTNPVSASTQSMRDGLKS) is disordered. Polar residues predominate over residues 368-381 (LPTTNPVSASTQSM).

This sequence belongs to the TPT transporter family. SLC35D subfamily. In terms of assembly, homooligomer.

The protein resides in the golgi apparatus membrane. The protein localises to the cytoplasmic vesicle membrane. It is found in the endoplasmic reticulum membrane. In terms of biological role, involved in the import of GDP-mannose from the cytoplasm into the Golgi lumen. The protein is GDP-mannose transporter (VRG4) of Coccidioides immitis (strain RS) (Valley fever fungus).